We begin with the raw amino-acid sequence, 171 residues long: Protein-export protein SecB (171 aa).

This sequence belongs to the SecB family. As to quaternary structure, homotetramer, a dimer of dimers. One homotetramer interacts with 1 SecA dimer.

The protein localises to the cytoplasm. Its function is as follows. One of the proteins required for the normal export of preproteins out of the cell cytoplasm. It is a molecular chaperone that binds to a subset of precursor proteins, maintaining them in a translocation-competent state. It also specifically binds to its receptor SecA. This is Protein-export protein SecB from Xanthomonas oryzae pv. oryzae (strain MAFF 311018).